A 257-amino-acid polypeptide reads, in one-letter code: Imidazole glycerol phosphate synthase subunit HisF (257 aa).

Residues D12 and D131 contribute to the active site.

It belongs to the HisA/HisF family. In terms of assembly, heterodimer of HisH and HisF.

Its subcellular location is the cytoplasm. The catalysed reaction is 5-[(5-phospho-1-deoxy-D-ribulos-1-ylimino)methylamino]-1-(5-phospho-beta-D-ribosyl)imidazole-4-carboxamide + L-glutamine = D-erythro-1-(imidazol-4-yl)glycerol 3-phosphate + 5-amino-1-(5-phospho-beta-D-ribosyl)imidazole-4-carboxamide + L-glutamate + H(+). It participates in amino-acid biosynthesis; L-histidine biosynthesis; L-histidine from 5-phospho-alpha-D-ribose 1-diphosphate: step 5/9. IGPS catalyzes the conversion of PRFAR and glutamine to IGP, AICAR and glutamate. The HisF subunit catalyzes the cyclization activity that produces IGP and AICAR from PRFAR using the ammonia provided by the HisH subunit. In Burkholderia multivorans (strain ATCC 17616 / 249), this protein is Imidazole glycerol phosphate synthase subunit HisF.